The sequence spans 501 residues: Growth/differentiation factor 5 (501 aa).

Residues 1-27 (MRLPKLLTFLLWYLAWLDLEFICTVLG) form the signal peptide. Positions 28–381 (APDLGQRPQG…YLFSQRRKRR (354 aa)) are excised as a propeptide. The disordered stretch occupies residues 29–169 (PDLGQRPQGT…EPFRPPPITP (141 aa)). The span at 99–111 (PRPGGPEPKPGHP) shows a compositional bias: pro residues. The span at 148–162 (KAREPGPPREPKEPF) shows a compositional bias: basic and acidic residues. A glycan (N-linked (GlcNAc...) asparagine) is linked at Asn189. Positions 246–265 (PSDTAKPAAPGGGRAAQLKL) are disordered. 3 cysteine pairs are disulfide-bonded: Cys400–Cys466, Cys429–Cys498, and Cys433–Cys500.

It belongs to the TGF-beta family. In terms of assembly, homodimer; disulfide-linked. Interacts with serine proteases, HTRA1 and HTRA3. Following LPS binding, may form a complex with CXCR4, HSP90AA1 and HSPA8. Interacts with high affinity with NOG; inhibits chondrogenesis. Interacts with high affinity with BMPR1B and lower affinity with BMPR1A; positively regulates chondrocyte differentiation and induces SMAD dependent signaling. Interacts with FBN1 (via N-terminal domain) and FBN2. Interacts with TGFBR3. As to expression, predominantly expressed in long bones during embryonic development. Expressed in monocytes (at protein level).

The protein localises to the secreted. It is found in the cell membrane. In terms of biological role, growth factor involved in bone and cartilage formation. During cartilage development regulates differentiation of chondrogenic tissue through two pathways. Firstly, positively regulates differentiation of chondrogenic tissue through its binding of high affinity with BMPR1B and of less affinity with BMPR1A, leading to induction of SMAD1-SMAD5-SMAD8 complex phosphorylation and then SMAD protein signaling transduction. Secondly, negatively regulates chondrogenic differentiation through its interaction with NOG. Required to prevent excessive muscle loss upon denervation. This function requires SMAD4 and is mediated by phosphorylated SMAD1/5/8. Binds bacterial lipopolysaccharide (LPS) and mediates LPS-induced inflammatory response, including TNF secretion by monocytes. The sequence is that of Growth/differentiation factor 5 (GDF5) from Homo sapiens (Human).